A 289-amino-acid polypeptide reads, in one-letter code: Rhodopsin (289 aa).

Over 1-7 (YLVSPAA) the chain is Extracellular. The chain crosses the membrane as a helical span at residues 8 to 32 (YAALGAYMFLLILIGFPVNFLTLYV). Residues 33 to 44 (TLEHKKLRTPLN) lie on the Cytoplasmic side of the membrane. The helical transmembrane segment at 45–67 (YILLNLAVADLFMVLGGFTTTMY) threads the bilayer. Topologically, residues 68–81 (TSMHGYFVLGRLGC) are extracellular. A disulfide bridge links cysteine 81 with cysteine 158. The helical transmembrane segment at 82 to 104 (NLEGFFATLGGEIALWSLVVLAI) threads the bilayer. Positions 105 to 107 (ERW) match the 'Ionic lock' involved in activated form stabilization motif. Residues 105 to 123 (ERWIVVCKPISNFRFTEDN) lie on the Cytoplasmic side of the membrane. The helical transmembrane segment at 124–144 (AIMGLAFSWVMALTCAVPPLV) threads the bilayer. Residues 145–173 (GWSRYIPEGMQCSCGVDYYTRAEGFNNES) lie on the Extracellular side of the membrane. Residue asparagine 171 is glycosylated (N-linked (GlcNAc...) asparagine). The chain crosses the membrane as a helical span at residues 174-195 (FVIYMFIVHFPIPLSVIFFCYG). Topologically, residues 196-223 (RLLCAVKEAAAAQQESETTQRAEKEVSR) are cytoplasmic. A helical transmembrane segment spans residues 224–245 (MVVILVIGFLVCWLPYASVAWW). Residues 246 to 257 (IFCNQGSDFGPI) are Extracellular-facing. The helical transmembrane segment at 258-279 (FMTLPSFFAKRPAIYNPMIYIC) threads the bilayer. Lysine 267 bears the N6-(retinylidene)lysine mark. Residues 280-289 (MNKQFRHCMI) lie on the Cytoplasmic side of the membrane.

It belongs to the G-protein coupled receptor 1 family. Opsin subfamily. In terms of processing, phosphorylated on some or all of the serine and threonine residues present in the C-terminal region. Post-translationally, contains one covalently linked retinal chromophore.

Its subcellular location is the membrane. It localises to the cell projection. It is found in the cilium. The protein resides in the photoreceptor outer segment. Photoreceptor required for image-forming vision at low light intensity. While most salt water fish species use retinal as chromophore, most freshwater fish use 3-dehydroretinal, or a mixture of retinal and 3-dehydroretinal. Light-induced isomerization of 11-cis to all-trans retinal triggers a conformational change that activates signaling via G-proteins. Subsequent receptor phosphorylation mediates displacement of the bound G-protein alpha subunit by arrestin and terminates signaling. This Batrachocottus multiradiatus (Baikal sculpin) protein is Rhodopsin (rho).